A 200-amino-acid polypeptide reads, in one-letter code: Putative HMP/thiamine-binding protein YkoF (200 aa).

The thiamine site is built by L17 and T49.

As to quaternary structure, homodimer in vitro. In vivo, may be a part of an ABC transporter complex which is composed of two ATP-binding proteins (YkoD), two transmembrane proteins (YkoC and YkoE) and a solute-binding protein (YkoF).

Functionally, part of the ABC transporter complex YkoCDEF that could transport hydroxymethylpyrimidine (HMP) and/or thiamine. Could also transport other HMP-containing products. Binds thiamine via its HMP moiety. The protein is Putative HMP/thiamine-binding protein YkoF (ykoF) of Bacillus subtilis (strain 168).